We begin with the raw amino-acid sequence, 113 residues long: uncharacterized protein (113 aa).

A helical transmembrane segment spans residues 4-26 (VLFKIAVALLYLLSFFLHRLHLR). Residues 32 to 74 (RRRRRRHHRRHHRRHHHHRRRRRRRRRRRRRHHRHHHHRHRRR) are disordered.

The protein localises to the membrane. This is an uncharacterized protein from Saccharomyces cerevisiae (strain ATCC 204508 / S288c) (Baker's yeast).